A 274-amino-acid polypeptide reads, in one-letter code: NAD(P)H dehydrogenase [quinone] 1 (274 aa).

Residues histidine 12, 18 to 19 (FN), and glutamine 67 each bind FAD. Serine 82 carries the post-translational modification Phosphoserine. 104–107 (LQWF) contacts FAD. 126–128 (AYT) provides a ligand contact to substrate. FAD-binding positions include 148-151 (TTGG), tyrosine 156, and arginine 201. Residues 225-274 (PSSLFDLNFQAGFLMKKEVQDEEKNKKFGLSVGHHLGKSIPTDNQIKARK) form an important for apoenzyme conformational stability region. Glycyl lysine isopeptide (Lys-Gly) (interchain with G-Cter in SUMO2) cross-links involve residues lysine 250 and lysine 251.

This sequence belongs to the NAD(P)H dehydrogenase (quinone) family. Homodimer. Interacts with PDLIM4 isoform 2; this interaction stabilizes PDLIM4 isoform 2 in response to oxidative stress and protects it from ubiquitin-independent degradation by the core 20S proteasome. Interacts with TP73 (via SAM domain); this interaction is NADH-dependent, stabilizes TP73 in response to oxidative stress and protects it from ubiquitin-independent degradation by the 20S proteasome. Interacts with TP53; this interaction is NADH-dependent, stabilizes TP53 in response to oxidative stress and protects it from ubiquitin-independent degradation by the 20S proteasome. FAD serves as cofactor.

The protein resides in the cytoplasm. Its subcellular location is the cytosol. It catalyses the reaction a quinone + NADH + H(+) = a quinol + NAD(+). The catalysed reaction is a quinone + NADPH + H(+) = a quinol + NADP(+). The enzyme catalyses ubiquinone-10 + NADH + H(+) = ubiquinol-10 + NAD(+). It carries out the reaction menadione + NADH + H(+) = menadiol + NAD(+). Its function is as follows. Flavin-containing quinone reductase that catalyzes two-electron reduction of quinones to hydroquinones using either NADH or NADPH as electron donors. In a ping-pong kinetic mechanism, the electrons are sequentially transferred from NAD(P)H to flavin cofactor and then from reduced flavin to the quinone, bypassing the formation of semiquinone and reactive oxygen species. Regulates cellular redox state primarily through quinone detoxification. Reduces components of plasma membrane redox system such as coenzyme Q and vitamin quinones, producing antioxidant hydroquinone forms. In the process may function as superoxide scavenger to prevent hydroquinone oxidation and facilitate excretion. Alternatively, can activate quinones and their derivatives by generating redox reactive hydroquinones with DNA cross-linking antitumor potential. Acts as a gatekeeper of the core 20S proteasome known to degrade proteins with unstructured regions. Upon oxidative stress, interacts with tumor suppressors TP53 and TP73 in a NADH-dependent way and inhibits their ubiquitin-independent degradation by the 20S proteasome. This Pongo abelii (Sumatran orangutan) protein is NAD(P)H dehydrogenase [quinone] 1 (NQO1).